The chain runs to 459 residues: Biphenyl dioxygenase subunit alpha (459 aa).

The 99-residue stretch at 58–156 (WLLLGHESHV…KEGDCGFDKA (99 aa)) folds into the Rieske domain. The [2Fe-2S] cluster site is built by C100, H102, C120, and H123. Positions 233 and 239 each coordinate Fe cation.

It belongs to the bacterial ring-hydroxylating dioxygenase alpha subunit family. In terms of assembly, heterohexamer consisting of three BphA subunits and three BphE subunits. A ferredoxin (BphF) and a ferredoxin reductase (BphG) must be present to obtain activity. [2Fe-2S] cluster is required as a cofactor. Fe cation serves as cofactor.

The catalysed reaction is biphenyl + NADH + O2 + H(+) = (2R,3S)-3-phenylcyclohexa-3,5-diene-1,2-diol + NAD(+). Its pathway is xenobiotic degradation; biphenyl degradation; 2-hydroxy-2,4-pentadienoate and benzoate from biphenyl: step 1/4. In Paraburkholderia xenovorans (strain LB400), this protein is Biphenyl dioxygenase subunit alpha (bphA).